The sequence spans 906 residues: Protein translocase subunit SecA (906 aa).

ATP-binding positions include Gln-86, 104 to 108 (GEGKT), and Asp-511. Basic and acidic residues-rich tracts occupy residues 853–865 (HESV…RHDE) and 877–888 (VRREGPKVKRND). The disordered stretch occupies residues 853-906 (HESVIDNNQRHDEDEQEEAPKVQQVRREGPKVKRNDPCPCGSGKKYKQCHSKVE). Zn(2+)-binding residues include Cys-890, Cys-892, Cys-901, and His-902. The span at 896–906 (KKYKQCHSKVE) shows a compositional bias: basic residues.

It belongs to the SecA family. Monomer and homodimer. Part of the essential Sec protein translocation apparatus which comprises SecA, SecYEG and auxiliary proteins SecDF-YajC and YidC. Zn(2+) is required as a cofactor.

The protein resides in the cell inner membrane. It is found in the cytoplasm. It catalyses the reaction ATP + H2O + cellular proteinSide 1 = ADP + phosphate + cellular proteinSide 2.. In terms of biological role, part of the Sec protein translocase complex. Interacts with the SecYEG preprotein conducting channel. Has a central role in coupling the hydrolysis of ATP to the transfer of proteins into and across the cell membrane, serving both as a receptor for the preprotein-SecB complex and as an ATP-driven molecular motor driving the stepwise translocation of polypeptide chains across the membrane. This Francisella tularensis subsp. mediasiatica (strain FSC147) protein is Protein translocase subunit SecA.